We begin with the raw amino-acid sequence, 414 residues long: Cytochrome b (414 aa).

The next 2 helical transmembrane spans lie at F40–A60 and G84–L104. Heme b contacts are provided by H91 and H105. 8 helical membrane-spanning segments follow: residues L121–Y141, Q154–V174, F188–V208, L252–M272, I294–Y314, Q317–L337, I351–I371, and Y378–I398. The heme b site is built by H192 and H206.

Belongs to the cytochrome b family. In terms of assembly, the main subunits of complex b-c1 are: cytochrome b, cytochrome c1 and the Rieske protein. Heme b serves as cofactor.

It localises to the cell membrane. Its function is as follows. Component of the ubiquinol-cytochrome c reductase complex (complex III or cytochrome b-c1 complex), which is a respiratory chain that generates an electrochemical potential coupled to ATP synthesis. In Allochromatium vinosum (strain ATCC 17899 / DSM 180 / NBRC 103801 / NCIMB 10441 / D) (Chromatium vinosum), this protein is Cytochrome b (petB).